A 266-amino-acid polypeptide reads, in one-letter code: Anamorsin homolog (266 aa).

The interval 1 to 164 (MIINFVGNTL…NITAENPDFL (164 aa)) is N-terminal SAM-like domain. The tract at residues 165–185 (SNEDNDVSSDDEDLYNNEDDK) is linker. Residues Cys-229, Cys-232, Cys-240, and Cys-243 each coordinate [4Fe-4S] cluster. 2 consecutive short sequence motifs (cx2C motif) follow at residues 229-232 (CGNC) and 240-243 (CASC). Residues 229-243 (CGNCYLGDAFRCASC) form a fe-S binding site B region.

It belongs to the anamorsin family. Monomer. The cofactor is [4Fe-4S] cluster.

Its subcellular location is the cytoplasm. The protein localises to the mitochondrion intermembrane space. Component of the cytosolic iron-sulfur (Fe-S) protein assembly (CIA) machinery. Required for the maturation of extramitochondrial Fe-S proteins. Part of an electron transfer chain functioning in an early step of cytosolic Fe-S biogenesis, facilitating the de novo assembly of a [4Fe-4S] cluster on the cytosolic Fe-S scaffold complex. Electrons are transferred from NADPH via a FAD- and FMN-containing diflavin oxidoreductase. Together with the diflavin oxidoreductase, also required for the assembly of the diferric tyrosyl radical cofactor of ribonucleotide reductase (RNR), probably by providing electrons for reduction during radical cofactor maturation in the catalytic small subunit. The sequence is that of Anamorsin homolog from Plasmodium falciparum (isolate 3D7).